A 387-amino-acid chain; its full sequence is O-phospho-L-seryl-tRNA:Cys-tRNA synthase 2 (387 aa).

Residues 89–90 (AR), Asn-196, and 219–221 (SGH) each bind pyridoxal 5'-phosphate. Lys-222 carries the N6-(pyridoxal phosphate)lysine modification.

It belongs to the SepCysS family. As to quaternary structure, homodimer. Interacts with SepRS. Requires pyridoxal 5'-phosphate as cofactor.

The catalysed reaction is O-phospho-L-seryl-tRNA(Cys) + hydrogen sulfide + H(+) = L-cysteinyl-tRNA(Cys) + phosphate. In terms of biological role, converts O-phospho-L-seryl-tRNA(Cys) (Sep-tRNA(Cys)) to L-cysteinyl-tRNA(Cys) (Cys-tRNA(Cys)). The chain is O-phospho-L-seryl-tRNA:Cys-tRNA synthase 2 from Methanococcoides burtonii (strain DSM 6242 / NBRC 107633 / OCM 468 / ACE-M).